Consider the following 370-residue polypeptide: Pantothenate kinase 3 (370 aa).

The active-site Proton acceptor is the Glu138. The acetyl-CoA site is built by Ser192, Ser195, and Arg207.

This sequence belongs to the type II pantothenate kinase family. Homodimer. In terms of tissue distribution, highly expressed in the liver.

The protein resides in the cytoplasm. The enzyme catalyses (R)-pantothenate + ATP = (R)-4'-phosphopantothenate + ADP + H(+). The protein operates within cofactor biosynthesis; coenzyme A biosynthesis; CoA from (R)-pantothenate: step 1/5. Its activity is regulated as follows. Subject to allosteric regulation, exists in two distinct conformational states, a catalytically incompetent (or open) conformation stabilized by the binding of acetyl(acyl)-CoA, and a catalytically competent (or closed) conformation stabilized by ATP-binding. Inhibited by acetyl-CoA and its thioesters which act as allosteric inhibitors and compete with the ATP-binding site. Inhibited by sulfonylureas and thiazolidinediones. Activated by oleoylethanolamide, palmitoyl-carnitine and oleoyl-carnitine. Functionally, catalyzes the phosphorylation of pantothenate to generate 4'-phosphopantothenate in the first and rate-determining step of coenzyme A (CoA) synthesis. In Homo sapiens (Human), this protein is Pantothenate kinase 3 (PANK3).